The primary structure comprises 187 residues: Proline-rich protein 29 (187 aa).

A disordered region spans residues 133–187 (HQPPWQGEPRIQHQPPASRQEEVRDVPPPPPPSATGTVGADVPPASDYYDAESLP).

This chain is Proline-rich protein 29 (Prr29), found in Mus musculus (Mouse).